The chain runs to 397 residues: Erythromycin C-12 hydroxylase (397 aa).

74-75 (HE) is a binding site for substrate. 2 residues coordinate heme: His81 and Arg85. Gln278 serves as a coordination point for substrate. Arg279 lines the heme pocket. Over residues 307 to 322 (RDSDAHDDPDRFDPSR) the composition is skewed to basic and acidic residues. The interval 307–326 (RDSDAHDDPDRFDPSRKSGG) is disordered. The heme site is built by His337 and Cys339.

The protein belongs to the cytochrome P450 family. Monomer. The cofactor is heme b.

It carries out the reaction erythromycin D + NADPH + O2 + H(+) = erythromycin C + NADP(+) + H2O. Its pathway is antibiotic biosynthesis; erythromycin biosynthesis. Functionally, responsible for the C-12 hydroxylation of the macrolactone ring of erythromycin. Thus, EryK catalyzes the hydroxylation of erythromycin D (ErD) at the C-12 position to produce erythromycin C (ErC). Erythromycin B (ErB) is not a substrate for this enzyme. This is Erythromycin C-12 hydroxylase (eryK) from Saccharopolyspora erythraea (strain ATCC 11635 / DSM 40517 / JCM 4748 / NBRC 13426 / NCIMB 8594 / NRRL 2338).